A 79-amino-acid chain; its full sequence is Neurotoxin BmK-M9 (79 aa).

The first 14 residues, 1–14 (MISFALLLMTGVES), serve as a signal peptide directing secretion. The 63-residue stretch at 16-78 (RDAYIAKPEN…VPIRVPGKCH (63 aa)) folds into the LCN-type CS-alpha/beta domain. Disulfide bonds link Cys26/Cys77, Cys30/Cys50, Cys36/Cys60, and Cys40/Cys62. Position 79 (Arg79) is a propeptide, removed by a carboxypeptidase.

The protein belongs to the long (4 C-C) scorpion toxin superfamily. Sodium channel inhibitor family. Alpha subfamily. In terms of tissue distribution, expressed by the venom gland.

The protein resides in the secreted. In terms of biological role, binds to sodium channels (Nav) and inhibits the inactivation of the activated channels, thereby blocking neuronal transmission. This toxin is active against mammals. In Olivierus martensii (Manchurian scorpion), this protein is Neurotoxin BmK-M9.